Consider the following 174-residue polypeptide: Protein PopB (174 aa).

The disordered stretch occupies residues 1 to 174 (MSHSKIKAGG…EAMKIKDDDD (174 aa)). The segment covering 50–65 (LNKSNLGSDSQTWTPG) has biased composition (polar residues). Residues 66–78 (STMVSLKSRSSSS) show a composition bias toward low complexity. Over residues 79-89 (HKPDTGGDTKP) the composition is skewed to basic and acidic residues. Positions 147–161 (IALQRAIQRQTQTRQ) are enriched in low complexity. Basic and acidic residues predominate over residues 162-174 (KMQEAMKIKDDDD).

Its subcellular location is the secreted. Its function is as follows. Probably involved in host-pathogen interactions. The chain is Protein PopB (popB) from Ralstonia nicotianae (strain ATCC BAA-1114 / GMI1000) (Ralstonia solanacearum).